The primary structure comprises 312 residues: uncharacterized protein (312 aa).

The next 2 membrane-spanning stretches (helical) occupy residues 4–24 and 286–306; these read AIYLLILCIFGLFSVYFTYAE and YLLSFIGIIIGFGIIGLAIYL.

The protein localises to the cell membrane. This is an uncharacterized protein from Methanocaldococcus jannaschii (strain ATCC 43067 / DSM 2661 / JAL-1 / JCM 10045 / NBRC 100440) (Methanococcus jannaschii).